Consider the following 372-residue polypeptide: MATPVEPPNGIRTPGKHYYSMWQSLFEIDTKYVPIKPIGRGAYGIVCSSVNRETNEKVAIKKINNAFENRIDALRTLRELKLLRHLRHENVIALKDVMMPIHRRSFKDVYLVYELMDTDLHQIIKSSQTLSNDHCQYFLFQLLRGLKYLHSANILHRDLKPGNLLINANCDLKICDFGLARTSSGKDQFMTEYVVTRWYRAPELLLCCDNYGTSIDVWSVGCIFAELLGRKPVFPGTECLNQLKLIINILGSQREEDIEFIDNPKARKYIKSLPYSPGTPFSRLYPHAHPLAIDLLQRMLVFDPSKRISVIEALQHPYMSPLYDPNTDPPAQVPINLDIDEDLGEETIREMMWSEILEYHPEAATAAMEVVL.

Residues Tyr32–Met319 enclose the Protein kinase domain. ATP is bound by residues Ile38–Val46 and Lys61. Catalysis depends on Asp158, which acts as the Proton acceptor. Thr191 is modified (phosphothreonine). The TXY motif lies at Thr191–Tyr193. Position 193 is a phosphotyrosine (Tyr193).

This sequence belongs to the protein kinase superfamily. CMGC Ser/Thr protein kinase family. MAP kinase subfamily. Mg(2+) serves as cofactor. Post-translationally, dually phosphorylated on Thr-191 and Tyr-193, which activates the enzyme. Very low autophosphorylation, although dramatically increased when Mn(2+) is added to the reaction instead of Mg(2+). Ubiquitous.

The catalysed reaction is L-seryl-[protein] + ATP = O-phospho-L-seryl-[protein] + ADP + H(+). The enzyme catalyses L-threonyl-[protein] + ATP = O-phospho-L-threonyl-[protein] + ADP + H(+). With respect to regulation, activated by tyrosine and threonine phosphorylation. This is Mitogen-activated protein kinase homolog NTF3 (NTF3) from Nicotiana tabacum (Common tobacco).